The following is a 589-amino-acid chain: Class I diterpene synthase 2, chloroplastic (589 aa).

Asp-328, Asp-332, Asn-472, Thr-476, and Glu-480 together coordinate Mg(2+). The short motif at 328 to 332 (DDFFD) is the DDXXD motif element.

This sequence belongs to the terpene synthase family. The cofactor is Mg(2+). Mostly expressed in trichomes of leaves and fruits.

It is found in the plastid. It localises to the chloroplast. It carries out the reaction 9alpha-copalyl diphosphate + H2O = (13S)-vitexifolin A + diphosphate. The enzyme catalyses peregrinol diphosphate = (13R)-9,13-epoxylabd-14-ene + diphosphate. The catalysed reaction is peregrinol diphosphate + H2O = viteagnusin D + diphosphate. It participates in secondary metabolite biosynthesis; terpenoid biosynthesis. Its function is as follows. Involved in the biosynthesis of labdane-type diterpenoid including cleroda-dienols, and peregrinol lactones and furan derivatives, dopaminergic diterpenoids that can bind to dopamine receptors in the human pituitary gland, have probably ability to lower prolactin levels, and are used to treat menstrual cycle disorders (e.g. premenstrual syndrome and mastodynia). Terpene synthase the catalyzes the conversion of peregrinol diphosphate to viteagnusin D and 9,13(R)-epoxy-labd-14-ene, and of syn-copalyl diphosophate to vitexifolin A. The sequence is that of Class I diterpene synthase 2, chloroplastic from Vitex agnus-castus (Chaste tree).